Here is a 139-residue protein sequence, read N- to C-terminus: MRADREELDFLPPVGGMAVDVMEVELPATRRAFMLVLVQTAAVLAAIHGMHLMNELYLTSFDEKFQWKIEAWRLYLALYYVVCIGMTIFCLDGGHADEPSREASPDLGAAGAELEDESAQAGAVQGPETLRSQVLRART.

The disordered stretch occupies residues 97–139; it reads DEPSREASPDLGAAGAELEDESAQAGAVQGPETLRSQVLRART.

In Homo sapiens (Human), this protein is Probable DNA-binding protein.